Here is a 392-residue protein sequence, read N- to C-terminus: Streptogrisin-D (392 aa).

Residues 1–64 (MCVSRRRNSG…AGFTFQTANA (64 aa)) form the signal peptide. The propeptide occupies 65–204 (SDDVPAFGAK…NRTAGEFTPL (140 aa)). Cysteines 218 and 238 form a disulfide. Active-site charge relay system residues include His-237, Asp-266, and Ser-348. A disulfide bridge connects residues Cys-342 and Cys-369.

Belongs to the peptidase S1 family. As to quaternary structure, homodimer.

Functionally, has a primary specificity for large aliphatic or aromatic amino acids. This chain is Streptogrisin-D (sprD), found in Streptomyces griseus.